A 637-amino-acid chain; its full sequence is Chaperone protein HtpG (637 aa).

The segment at 1–330 (MATAPASHAF…TEDLPLNISR (330 aa)) is a; substrate-binding. Residues 331–551 (ETLQENVVVR…GGASTSSMDR (221 aa)) are b. Residues 552–637 (LLRVLHKDES…GDWYKAVRGL (86 aa)) form a c region.

It belongs to the heat shock protein 90 family. Homodimer.

It is found in the cytoplasm. Functionally, molecular chaperone. Has ATPase activity. The sequence is that of Chaperone protein HtpG from Nitratidesulfovibrio vulgaris (strain ATCC 29579 / DSM 644 / CCUG 34227 / NCIMB 8303 / VKM B-1760 / Hildenborough) (Desulfovibrio vulgaris).